Consider the following 261-residue polypeptide: uncharacterized protein (261 aa).

The N-terminal stretch at 1 to 20 (MKIQVMLIIIFVGIFTICLA) is a signal peptide. N-linked (GlcNAc...) asparagine; by host glycosylation is found at asparagine 22 and asparagine 27.

The protein resides in the secreted. This is an uncharacterized protein from Acanthamoeba polyphaga (Amoeba).